The chain runs to 396 residues: uncharacterized protein (396 aa).

12 helical membrane passes run 12–32 (LLAL…SVGL), 48–68 (GLTV…LTSL), 78–98 (LLWI…ASSI), 106–126 (VISA…AADI), 138–158 (IMFT…TFIG), 165–185 (FAFM…GILV), 209–229 (LLLL…VFTY), 242–262 (AGTV…GNMI), 271–291 (PIAA…VLTF), 297–317 (AAGL…VPGL), 338–358 (AMNI…GGVI), and 362–382 (IGLI…VILT).

It belongs to the major facilitator superfamily.

The protein resides in the cell membrane. This is an uncharacterized protein from Bacillus subtilis (strain 168).